The following is a 279-amino-acid chain: Thymidylate synthase (279 aa).

133–134 (RR) lines the dUMP pocket. The active-site Nucleophile is the cysteine 154. Residues 178–181 (RSND), asparagine 189, and 219–221 (HIY) each bind dUMP. Position 181 (aspartate 181) interacts with (6R)-5,10-methylene-5,6,7,8-tetrahydrofolate. Alanine 278 contributes to the (6R)-5,10-methylene-5,6,7,8-tetrahydrofolate binding site.

It belongs to the thymidylate synthase family. Bacterial-type ThyA subfamily. Homodimer.

It localises to the cytoplasm. It carries out the reaction dUMP + (6R)-5,10-methylene-5,6,7,8-tetrahydrofolate = 7,8-dihydrofolate + dTMP. Its pathway is pyrimidine metabolism; dTTP biosynthesis. In terms of biological role, catalyzes the reductive methylation of 2'-deoxyuridine-5'-monophosphate (dUMP) to 2'-deoxythymidine-5'-monophosphate (dTMP) while utilizing 5,10-methylenetetrahydrofolate (mTHF) as the methyl donor and reductant in the reaction, yielding dihydrofolate (DHF) as a by-product. This enzymatic reaction provides an intracellular de novo source of dTMP, an essential precursor for DNA biosynthesis. This Streptococcus pyogenes serotype M12 (strain MGAS2096) protein is Thymidylate synthase.